A 399-amino-acid chain; its full sequence is Alpha-ketoglutarate-dependent dioxygenase fc-dox (399 aa).

Fe cation is bound by residues histidine 158 and aspartate 160. Threonine 203 lines the 2-oxoglutarate pocket. Histidine 355 is a binding site for Fe cation. Arginine 367 contributes to the 2-oxoglutarate binding site. Positions 371-399 (QGWLAGDRPPKGPVPIPDPRARSSIYYQK) are disordered.

Belongs to the TfdA dioxygenase family. The cofactor is Fe(2+).

It participates in mycotoxin biosynthesis. Its function is as follows. Alpha-ketoglutarate-dependent dioxygenase; part of the 2 gene clusters that mediate the biosynthesis of fusicoccins, diterpene glucosides that display phytohormone-like activity and function as potent activators of plasma membrane H(+)-ATPases in plants by modifying 14-3-3 proteins and cause the plant disease constriction canker. The first step in the pathway is performed by the fusicoccadiene synthase PaFS that possesses both prenyl transferase and terpene cyclase activity, converting isopentenyl diphosphate and dimethylallyl diphosphate into geranylgeranyl diphosphate (GGDP) and successively converting GGDP into fusicocca-2,10(14)-diene, a precursor for fusicoccin H. The second step is the oxidation at the C-8 position by the cytochrome P450 monooxygenase PaP450-2 to yield fusicocca-2,10(14)-diene-8-beta-ol. The cytochrome P450 monooxygenase PaP450-1 then catalyzes the hydroxylation at the C-16 position to produce fusicocca-2,10(14)-diene-8-beta,16-diol. The dioxygenase fc-dox then catalyzes the 16-oxydation of fusicocca-2,10(14)-diene-8-beta,16-diol to yield an aldehyde (8-beta-hydroxyfusicocca-1,10(14)-dien-16-al). The short-chain dehydrogenase/reductase fc-sdr catalyzes the reduction of the aldehyde to yield fusicocca-1,10(14)-diene-8-beta,16-diol. The next step is the hydroxylation at C-9 performed by the cytochrome P450 monooxygenase PaP450-3 that leads to fusicoccin H aglycon which is glycosylated to fusicoccin H by the O-glycosyltransferase PaGT. Hydroxylation at C-12 by the cytochrome P450 monooxygenase PaP450-4 leads then to the production of fusicoccin Q and is followed by methylation by the O-methyltransferase PaMT to yield fusicoccin P. Fusicoccin P is further converted to fusicoccin J via prenylation by the O-glucose prenyltransferase PaPT. Cytochrome P450 monooxygenase PaP450-5 then performs hydroxylation at C-19 to yield dideacetyl-fusicoccin A which is acetylated to 3'-O-deacetyl-fusicoccin A by the O-acetyltransferase PaAT-2. Finally, a another acetylation by the O-acetyltransferase PaAT-1 yields fusicoccin A. This chain is Alpha-ketoglutarate-dependent dioxygenase fc-dox, found in Phomopsis amygdali (Fusicoccum amygdali).